A 122-amino-acid chain; its full sequence is Small ribosomal subunit protein uS13 (122 aa).

Residues 95–122 (GLPVRGQRTHTNARTRKGPRRGTVGKKK) are disordered.

This sequence belongs to the universal ribosomal protein uS13 family. Part of the 30S ribosomal subunit. Forms a loose heterodimer with protein S19. Forms two bridges to the 50S subunit in the 70S ribosome.

In terms of biological role, located at the top of the head of the 30S subunit, it contacts several helices of the 16S rRNA. In the 70S ribosome it contacts the 23S rRNA (bridge B1a) and protein L5 of the 50S subunit (bridge B1b), connecting the 2 subunits; these bridges are implicated in subunit movement. Contacts the tRNAs in the A and P-sites. This Nitratidesulfovibrio vulgaris (strain ATCC 29579 / DSM 644 / CCUG 34227 / NCIMB 8303 / VKM B-1760 / Hildenborough) (Desulfovibrio vulgaris) protein is Small ribosomal subunit protein uS13.